A 299-amino-acid chain; its full sequence is Undecaprenyl-diphosphatase (299 aa).

8 helical membrane-spanning segments follow: residues 10-32 (LFSLMILLAATSELLAACWRNLV), 63-83 (PGVSATAVIQLGSILAVIAYF), 112-132 (LAIAIGTMPILLAGMAIKLFW), 143-163 (LPSIAVVSIVMALLLALAESF), 178-198 (GFVVGLAQALALIPGVSRSGS), 213-233 (AARFCFLLGIPAITLAGLVEL), 243-263 (GGVLPLLVGIVSAAFVSWLAI), and 276-296 (WIFVVYRLLFGVLVLAWWLSG).

This sequence belongs to the UppP family.

It is found in the cell inner membrane. It carries out the reaction di-trans,octa-cis-undecaprenyl diphosphate + H2O = di-trans,octa-cis-undecaprenyl phosphate + phosphate + H(+). Its function is as follows. Catalyzes the dephosphorylation of undecaprenyl diphosphate (UPP). Confers resistance to bacitracin. The chain is Undecaprenyl-diphosphatase from Prochlorococcus marinus (strain MIT 9313).